A 251-amino-acid chain; its full sequence is Hydroxyacylglutathione hydrolase (251 aa).

Zn(2+)-binding residues include H53, H55, D57, H58, H110, D127, and H165.

It belongs to the metallo-beta-lactamase superfamily. Glyoxalase II family. As to quaternary structure, monomer. Zn(2+) is required as a cofactor.

It catalyses the reaction an S-(2-hydroxyacyl)glutathione + H2O = a 2-hydroxy carboxylate + glutathione + H(+). It functions in the pathway secondary metabolite metabolism; methylglyoxal degradation; (R)-lactate from methylglyoxal: step 2/2. In terms of biological role, thiolesterase that catalyzes the hydrolysis of S-D-lactoyl-glutathione to form glutathione and D-lactic acid. The protein is Hydroxyacylglutathione hydrolase of Blochmanniella pennsylvanica (strain BPEN).